Reading from the N-terminus, the 440-residue chain is MDTKSVQVQSPATPVYILRGHASPVHALHIYSQNLRLVSGDANGWIVVWDLVTKRPVTAWKAHEGAVLEARGFDVGSGATEIYTHGRDHKLCVWKLRPEDETFLNKTLPVDATESAQPGSKTQPWLLHSLPVNALNFCAFSMAFVNPDGLPAFPSQSGRPENTLFAVPNALDSGGVDIFHLPSERRISTIPSEQSPKTGMLMAVNLFISPSGDLYVASAYEDGHVMVFVHRGALKSASFEREYISNNPLKWDKLYAGRPHSQPVLSLDVAPSHGYFISSSADALIVKHPIPNTGSAGYIPTAGYKEESPLKIVNTKHSGQQGLRIRSDEKVFATAGWDSRIRVYSGKTMKELAVLKWHKDGCYSIAFGDTESMSSLVSPSSESAKQEPRDADQGAAGQTTVDGRNYSLATVQQQRNQKVQQTHWLAAGSKDGKISLWDIY.

WD repeat units lie at residues 20–59 (GHASPVHALHIYSQNLRLVSGDANGWIVVWDLVTKRPVTA), 62–104 (AHEG…ETFL), 196–238 (PKTG…KSAS), 259–300 (PHSQ…GYIP), 315–354 (TKHSGQQGLRIRSDEKVFATAGWDSRIRVYSGKTMKELAV), 357–399 (WHKD…AGQT), and 403–440 (GRNYSLATVQQQRNQKVQQTHWLAAGSKDGKISLWDIY). Positions 376–399 (LVSPSSESAKQEPRDADQGAAGQT) are disordered.

This sequence belongs to the WD repeat ASA1 family. As to quaternary structure, component of the ASTRA chromatin remodeling machinery complex.

The protein localises to the nucleus. Its function is as follows. Component of the ASTRA complex involved in chromatin remodeling. This chain is ASTRA-associated protein 1 (asa1), found in Penicillium rubens (strain ATCC 28089 / DSM 1075 / NRRL 1951 / Wisconsin 54-1255) (Penicillium chrysogenum).